Reading from the N-terminus, the 233-residue chain is Protein lin-7 homolog A (233 aa).

A Kinase interacting site motif is present at residues 14–28 (MATLTVVQPLTLDRD). One can recognise an L27 domain in the interval 25–80 (LDRDVARAIELLEKLQESGEVPVHKLQSLKKVLQSEFCTAIREVYQYMHETITVNG). A PDZ domain is found at 108-190 (VVELPKTDEG…SVKLVVRYTP (83 aa)). Positions 214–233 (LLIQQQQQQQQQQPQQNHMS) are disordered.

Belongs to the lin-7 family. As to quaternary structure, forms a complex with CASK and CASKIN1. Component of the brain-specific heterotrimeric complex (LIN-10-LIN-2-LIN-7 complex) composed of at least APBA1, CASK, and LIN7, which associates with the motor protein KIF17 to transport vesicles along microtubules. Can also interact with other modular proteins containing protein-protein interaction domains like PALS1, PALS2, MPP7, DLG1, DLG2 and DLG3 through its L27 domain. Interacts with DLG4, GRIN2B and MARCHF11 as well as CDH1 and CTNNB1, the channels KCNJ12/Kir2.2, KCNJ4/Kir2.3 and probably KCNJ2/Kir2.1 and SLC6A12/BGT-1 via its PDZ domain. The association of LIN7A with cadherin and beta-catenin is calcium-dependent, occurs at synaptic junctions and requires the actin cytoskeleton. Interacts with EGFR, ERBB2, ERBB3 and ERBB4 with both PDZ and KID domains. Associates with KIF17 via APBA1. Interacts with HTR4. Forms a tripartite complex composed of DLG1, MPP7 and LIN7 (LIN7A or LIN7C). As to expression, expressed in the kidney, along the length of the nephron.

The protein localises to the cell membrane. It localises to the basolateral cell membrane. The protein resides in the cell junction. Its subcellular location is the postsynaptic density membrane. It is found in the tight junction. Functionally, plays a role in establishing and maintaining the asymmetric distribution of channels and receptors at the plasma membrane of polarized cells. Forms membrane-associated multiprotein complexes that may regulate delivery and recycling of proteins to the correct membrane domains. The tripartite complex composed of LIN7 (LIN7A, LIN7B or LIN7C), CASK and APBA1 associates with the motor protein KIF17 to transport vesicles containing N-methyl-D-aspartate (NMDA) receptor subunit NR2B along microtubules. This complex may have the potential to couple synaptic vesicle exocytosis to cell adhesion in brain. Ensures the proper localization of GRIN2B (subunit 2B of the NMDA receptor) to neuronal postsynaptic density and may function in localizing synaptic vesicles at synapses where it is recruited by beta-catenin and cadherin. Required to localize Kir2 channels, GABA transporter (SLC6A12) and EGFR/ERBB1, ERBB2, ERBB3 and ERBB4 to the basolateral membrane of epithelial cells. The chain is Protein lin-7 homolog A (Lin7a) from Mus musculus (Mouse).